A 359-amino-acid polypeptide reads, in one-letter code: 3-dehydroquinate synthase (359 aa).

NAD(+) contacts are provided by residues 72-77, 106-110, 130-131, Lys143, Lys152, and 170-173; these read DGEQYK, GVIGD, TT, and CLKT. Glu185, His248, and His265 together coordinate Zn(2+).

It belongs to the sugar phosphate cyclases superfamily. Dehydroquinate synthase family. The cofactor is Co(2+). It depends on Zn(2+) as a cofactor. Requires NAD(+) as cofactor.

Its subcellular location is the cytoplasm. It catalyses the reaction 7-phospho-2-dehydro-3-deoxy-D-arabino-heptonate = 3-dehydroquinate + phosphate. Its pathway is metabolic intermediate biosynthesis; chorismate biosynthesis; chorismate from D-erythrose 4-phosphate and phosphoenolpyruvate: step 2/7. Its function is as follows. Catalyzes the conversion of 3-deoxy-D-arabino-heptulosonate 7-phosphate (DAHP) to dehydroquinate (DHQ). This chain is 3-dehydroquinate synthase, found in Photobacterium profundum (strain SS9).